The chain runs to 154 residues: MAARLCCQLDPARDVLCLRPVGAEPCRRPVSGSLRTLPSSLPSAVPADHGAHLSLRGLPVCAFSSAGPCALRFTSARCMETTVNAPRNLPTVLHKRTLGLSAMSTTKIETYFKDCVFKDWEELGEEIRFKVFVLGGCRHKLVCAPAPCNFFTSA.

Residues 68–117 (PCALRFTSARCMETTVNAPRNLPTVLHKRTLGLSAMSTTKIETYFKDCVF) are mitochondrial targeting sequence.

It belongs to the orthohepadnavirus protein X family. May form homodimer. May interact with host CEBPA, CFLAR, CREB1, DDB1, E4F1, HBXIP, HSPD1/HSP60, NFKBIA, POLR2E and SMAD4. Interacts with host SMC5-SMC6 complex and induces its degradation. Interacts with host TRPC4AP; leading to prevent ubiquitination of TRPC4AP. Interacts with host PLSCR1; this interaction promotes ubiquitination and degradation of HBx and impairs HBx-mediated cell proliferation. Post-translationally, a fraction may be phosphorylated in insect cells and HepG2 cells, a human hepatoblastoma cell line. Phosphorylated in vitro by host protein kinase C or mitogen-activated protein kinase. N-acetylated in insect cells.

The protein localises to the host cytoplasm. It localises to the host nucleus. Its subcellular location is the host mitochondrion. Multifunctional protein that plays a role in silencing host antiviral defenses and promoting viral transcription. Does not seem to be essential for HBV infection. May be directly involved in development of cirrhosis and liver cancer (hepatocellular carcinoma). Most of cytosolic activities involve modulation of cytosolic calcium. The effect on apoptosis is controversial depending on the cell types in which the studies have been conducted. May induce apoptosis by localizing in mitochondria and causing loss of mitochondrial membrane potential. May also modulate apoptosis by binding host CFLAR, a key regulator of the death-inducing signaling complex (DISC). Promotes viral transcription by using the host E3 ubiquitin ligase DDB1 to target the SMC5-SMC6 complex to proteasomal degradation. This host complex would otherwise bind to viral episomal DNA, and prevents its transcription. Moderately stimulates transcription of many different viral and cellular transcription elements. Promoters and enhancers stimulated by HBx contain DNA binding sites for NF-kappa-B, AP-1, AP-2, c-EBP, ATF/CREB, or the calcium-activated factor NF-AT. This is Protein X from Gorilla gorilla (western gorilla).